A 320-amino-acid chain; its full sequence is Glycerol-3-phosphate dehydrogenase [NAD(P)+] (320 aa).

Residues phenylalanine 11, arginine 30, and lysine 102 each contribute to the NADPH site. Residues lysine 102, glycine 130, and serine 132 each contribute to the sn-glycerol 3-phosphate site. Residue alanine 134 coordinates NADPH. Positions 185, 238, 248, 249, and 250 each coordinate sn-glycerol 3-phosphate. Catalysis depends on lysine 185, which acts as the Proton acceptor. Arginine 249 contributes to the NADPH binding site. An NADPH-binding site is contributed by glutamate 270.

Belongs to the NAD-dependent glycerol-3-phosphate dehydrogenase family.

It is found in the cytoplasm. It catalyses the reaction sn-glycerol 3-phosphate + NAD(+) = dihydroxyacetone phosphate + NADH + H(+). The catalysed reaction is sn-glycerol 3-phosphate + NADP(+) = dihydroxyacetone phosphate + NADPH + H(+). Its pathway is membrane lipid metabolism; glycerophospholipid metabolism. Functionally, catalyzes the reduction of the glycolytic intermediate dihydroxyacetone phosphate (DHAP) to sn-glycerol 3-phosphate (G3P), the key precursor for phospholipid synthesis. The sequence is that of Glycerol-3-phosphate dehydrogenase [NAD(P)+] from Ruegeria sp. (strain TM1040) (Silicibacter sp.).